The chain runs to 177 residues: Insertion element IS1223 uncharacterized 20.7 kDa protein (177 aa).

Residues 112-131 (KQKGRPRKVPKKSKKTTKKL) are disordered. The span at 113–128 (QKGRPRKVPKKSKKTT) shows a compositional bias: basic residues.

This sequence belongs to the IS150/IS1296 orfA family.

The polypeptide is Insertion element IS1223 uncharacterized 20.7 kDa protein (Lactobacillus johnsonii).